The primary structure comprises 279 residues: Phosphate import ATP-binding protein PstB (279 aa).

The 242-residue stretch at 33–274 folds into the ABC transporter domain; it reads LDINKLNLFY…PLKKKTEDYI (242 aa). 65-72 is an ATP binding site; sequence GPSGCGKS.

This sequence belongs to the ABC transporter superfamily. Phosphate importer (TC 3.A.1.7) family. As to quaternary structure, the complex is composed of two ATP-binding proteins (PstB), two transmembrane proteins (PstC and PstA) and a solute-binding protein (PstS).

Its subcellular location is the cell inner membrane. The catalysed reaction is phosphate(out) + ATP + H2O = ADP + 2 phosphate(in) + H(+). Part of the ABC transporter complex PstSACB involved in phosphate import. Responsible for energy coupling to the transport system. This chain is Phosphate import ATP-binding protein PstB, found in Colwellia psychrerythraea (strain 34H / ATCC BAA-681) (Vibrio psychroerythus).